A 512-amino-acid chain; its full sequence is Perphorin-1 (512 aa).

A signal peptide spans 1-18; it reads MMRKALLALCVATAFAVA. 7 N-linked (GlcNAc...) asparagine glycosylation sites follow: asparagine 49, asparagine 96, asparagine 118, asparagine 378, asparagine 381, asparagine 403, and asparagine 476.

The protein localises to the secreted. It is found in the extracellular space. The protein resides in the extracellular matrix. May be involved in conversion of asexual males and females to the sexual pathway. The polypeptide is Perphorin-1 (Volvox carteri (Green alga)).